The following is a 243-amino-acid chain: 3-deoxy-manno-octulosonate cytidylyltransferase (243 aa).

Belongs to the KdsB family.

The protein resides in the cytoplasm. The enzyme catalyses 3-deoxy-alpha-D-manno-oct-2-ulosonate + CTP = CMP-3-deoxy-beta-D-manno-octulosonate + diphosphate. It functions in the pathway nucleotide-sugar biosynthesis; CMP-3-deoxy-D-manno-octulosonate biosynthesis; CMP-3-deoxy-D-manno-octulosonate from 3-deoxy-D-manno-octulosonate and CTP: step 1/1. The protein operates within bacterial outer membrane biogenesis; lipopolysaccharide biosynthesis. Its function is as follows. Activates KDO (a required 8-carbon sugar) for incorporation into bacterial lipopolysaccharide in Gram-negative bacteria. This Helicobacter pylori (strain P12) protein is 3-deoxy-manno-octulosonate cytidylyltransferase.